A 465-amino-acid polypeptide reads, in one-letter code: Cysteine--tRNA ligase (465 aa).

Cysteine 29 serves as a coordination point for Zn(2+). Positions 31-41 match the 'HIGH' region motif; sequence PTVYNYIHIGN. The Zn(2+) site is built by cysteine 209, histidine 234, and glutamate 238. A 'KMSKS' region motif is present at residues 266–270; sequence KMSKS. Lysine 269 provides a ligand contact to ATP. Serine 270 is subject to Phosphoserine.

The protein belongs to the class-I aminoacyl-tRNA synthetase family. Monomer. Requires Zn(2+) as cofactor.

Its subcellular location is the cytoplasm. The catalysed reaction is tRNA(Cys) + L-cysteine + ATP = L-cysteinyl-tRNA(Cys) + AMP + diphosphate. This is Cysteine--tRNA ligase from Bacillus thuringiensis (strain Al Hakam).